The sequence spans 60 residues: Large ribosomal subunit protein uL30 (60 aa).

The protein belongs to the universal ribosomal protein uL30 family. Part of the 50S ribosomal subunit.

The chain is Large ribosomal subunit protein uL30 from Streptococcus pyogenes serotype M1.